Consider the following 193-residue polypeptide: NAD(P)H-quinone oxidoreductase subunit J (193 aa).

A disordered region spans residues 1 to 21 (MSDSAPTNPTPTNPAPEESAS).

This sequence belongs to the complex I 30 kDa subunit family. NDH-1 can be composed of about 15 different subunits; different subcomplexes with different compositions have been identified which probably have different functions.

The protein resides in the cellular thylakoid membrane. The enzyme catalyses a plastoquinone + NADH + (n+1) H(+)(in) = a plastoquinol + NAD(+) + n H(+)(out). It carries out the reaction a plastoquinone + NADPH + (n+1) H(+)(in) = a plastoquinol + NADP(+) + n H(+)(out). Its function is as follows. NDH-1 shuttles electrons from an unknown electron donor, via FMN and iron-sulfur (Fe-S) centers, to quinones in the respiratory and/or the photosynthetic chain. The immediate electron acceptor for the enzyme in this species is believed to be plastoquinone. Couples the redox reaction to proton translocation, and thus conserves the redox energy in a proton gradient. Cyanobacterial NDH-1 also plays a role in inorganic carbon-concentration. The polypeptide is NAD(P)H-quinone oxidoreductase subunit J (Synechococcus sp. (strain CC9902)).